The primary structure comprises 343 residues: MLTDRQLLILQAIVDDYIRSAEPVGSRSISKREDITFSPATIRNEMADLEELGFLEKPHSSAGRIPSQKGYRYYVDHLLMPHRLTKKERHYIHELFTKRIQEVEQAIQQSAQILSSMTRYISVVLGPEMFETKLKSIHMIPLTAHSVVVIFVTDTGYVENQTMHLPHSVNPVDLEKTVNILNERLAGVSLFQLREKLNKEVADVLRFHVTNYELVLDLLEKTFEAEKSEKVFYGGKTNLLSQPEFRDVEKIKQILTILEQDDVMHQMIRSSGEQIQVRIGHENNVEAFEDLSVITASYSIGGKHMGTIGIVGPTRMEYRRTISVVEHLSKDLTKLLTDLYQQS.

It belongs to the HrcA family.

In terms of biological role, negative regulator of class I heat shock genes (grpE-dnaK-dnaJ and groELS operons). Prevents heat-shock induction of these operons. This is Heat-inducible transcription repressor HrcA from Halalkalibacterium halodurans (strain ATCC BAA-125 / DSM 18197 / FERM 7344 / JCM 9153 / C-125) (Bacillus halodurans).